Consider the following 436-residue polypeptide: Enolase (436 aa).

Gln167 is a (2R)-2-phosphoglycerate binding site. Glu209 acts as the Proton donor in catalysis. Mg(2+) contacts are provided by Asp246, Glu291, and Asp318. Residues Lys343, Arg372, Ser373, and Lys394 each contribute to the (2R)-2-phosphoglycerate site. Lys343 acts as the Proton acceptor in catalysis.

The protein belongs to the enolase family. Component of the RNA degradosome, a multiprotein complex involved in RNA processing and mRNA degradation. Mg(2+) serves as cofactor.

It localises to the cytoplasm. It is found in the secreted. Its subcellular location is the cell surface. The catalysed reaction is (2R)-2-phosphoglycerate = phosphoenolpyruvate + H2O. It participates in carbohydrate degradation; glycolysis; pyruvate from D-glyceraldehyde 3-phosphate: step 4/5. In terms of biological role, catalyzes the reversible conversion of 2-phosphoglycerate (2-PG) into phosphoenolpyruvate (PEP). It is essential for the degradation of carbohydrates via glycolysis. The polypeptide is Enolase (Haemophilus influenzae (strain 86-028NP)).